The primary structure comprises 471 residues: U1 small nuclear ribonucleoprotein 70 kDa (471 aa).

The disordered stretch occupies residues 48–78 (FEDPRDAPPPTRAETREERMERKRREKIERR). Over residues 60-78 (AETREERMERKRREKIERR) the composition is skewed to basic and acidic residues. The required for interaction with U1 RNA stretch occupies residues 92 to 205 (HNDQNAQGDA…GGGLGGTRRG (114 aa)). One can recognise an RRM domain in the interval 103 to 184 (KTLFVARVNY…RRVLVDVERG (82 aa)). The tract at residues 190-471 (WRPRRLGGGL…NGYMMEPPME (282 aa)) is disordered. Residues 195 to 204 (LGGGLGGTRR) are compositionally biased toward gly residues. Residues 210-246 (NIRHSGRDDTSRYDERDRERERDRRERSREREKEPRE) are compositionally biased toward basic and acidic residues. Basic residues predominate over residues 247–261 (RRRSRSRERRRKSRS). Basic and acidic residues predominate over residues 262-288 (REKEERKRTREKSKDKDKEKDKDNKDR). The segment covering 289-298 (DRKRRSRSRE) has biased composition (basic residues). The segment covering 299-316 (RKRERDRDREKKEERVEA) has biased composition (basic and acidic residues). Residues 317-326 (EVPEADDAPQ) are compositionally biased toward acidic residues. The segment covering 339 to 428 (IELKQEPEEK…RSEKREERVP (90 aa)) has biased composition (basic and acidic residues).

Component of the U1 snRNP. The U1 snRNP is composed of the U1 snRNA and the 7 core Sm proteins snrpb, snrpd1, snrpd2, snrpd3, snrpe, snrpf and snrpg that assemble in a heptameric protein ring on the Sm site of the small nuclear RNA to form the core snRNP, and at least three U1 snRNP-specific proteins snrnp70/U1-70K, snrpa/U1-A and snrpc/U1-C.

The protein resides in the nucleus speckle. It localises to the nucleus. Its subcellular location is the nucleoplasm. Component of the spliceosomal U1 snRNP, which is essential for recognition of the pre-mRNA 5' splice-site and the subsequent assembly of the spliceosome. snrnp70 binds to the loop I region of U1-snRNA. This Xenopus laevis (African clawed frog) protein is U1 small nuclear ribonucleoprotein 70 kDa (snrnp70).